Reading from the N-terminus, the 722-residue chain is Phenylalanine ammonia-lyase lenB (722 aa).

Tyr83 acts as the Proton donor/acceptor in catalysis. The segment at 117 to 136 is disordered; sequence LPTDRSSSRPSSRYPHGLRS. The 5-imidazolinone (Ala-Gly) cross-link spans 190–192; that stretch reads ASG. At Ser191 the chain carries 2,3-didehydroalanine (Ser). Residues Asn247, Gln334, Arg340, Asn370, Lys441, Glu469, and Asn472 each contribute to the (E)-cinnamate site.

This sequence belongs to the PAL/histidase family. In terms of processing, contains an active site 4-methylidene-imidazol-5-one (MIO), which is formed autocatalytically by cyclization and dehydration of residues Ala-Ser-Gly.

It catalyses the reaction L-phenylalanine = (E)-cinnamate + NH4(+). It participates in alkaloid biosynthesis. Its function is as follows. Phenylalanine ammonia-lyase; part of the gene cluster that mediates the biosynthesis of the ergot alkaloids lentopeptins A and B. Within the pathway, lenB provides the cinnamic acid starter unit for the synthesis of the N-acyldiketopiperazine intermediate by the NRPS lenA. Cinnamic acid is condensed with the Ala-Val-Ala peptide chain by lenA which leads to the N-acyldiketopiperazine intermediate which in turn is converted into lentopeptins A and B by the cytochrome P450 monooxygenase lenC. This Aspergillus lentulus protein is Phenylalanine ammonia-lyase lenB.